A 172-amino-acid polypeptide reads, in one-letter code: L-amino acid N-acyltransferase MnaT (172 aa).

The region spanning 1–163 is the N-acetyltransferase domain; the sequence is MSIRFARKAD…DLTFMQLQLD (163 aa). Acetyl-CoA-binding positions include 85 to 87, 93 to 98, Asn124, and Ser133; these read VYV and GKGLGR.

Belongs to the acetyltransferase family. PAT/BAR subfamily.

The catalysed reaction is L-methionine + acetyl-CoA = N-acetyl-L-methionine + CoA + H(+). It catalyses the reaction propanoyl-CoA + L-methionine = N-propanoyl-L-methioninate + CoA + H(+). The enzyme catalyses L-alpha-phenylglycine + acetyl-CoA = N-acetyl-L-alpha-phenylglycine + CoA + H(+). It carries out the reaction L-methionine sulfoximine + acetyl-CoA = N-acetyl-L-methionine sulfoximine + CoA + H(+). The catalysed reaction is L-methionine sulfone + acetyl-CoA = N-acetyl-L-methionine sulfone + CoA + H(+). In terms of biological role, acyltransferase that appears to be required for E.coli optimal growth rate and yield via the formation of N-acetylated amino acids. Catalyzes the acylation of L-methionine using acetyl-CoA or propanoyl-CoA as acyl donors, and the acetylation of L-phenylglycine. Is also able to N-acylate other free L-amino acids and their derivatives using a CoA thioester as cosubstrate. Using acetyl-CoA as an acyl donor, substrate specificity is methionine sulfone &gt; methionine sulfoximine &gt; methionine sulfoxide &gt; methionine. Asparagine, lysine, glutamine, aspartate and glutamate are very poor substrates. Using methionine as a substrate, acyl donor preference is propanoyl-CoA &gt; acetyl-CoA &gt;&gt; butyryl-CoA. Likely plays a role in the resistance against the toxic effects of L-methionine sulfoximine (MSX), via its ability to catalyze its acetylation; MSX is a rare amino acid which inhibits glutamine synthetase (GlnA). In Escherichia coli (strain K12), this protein is L-amino acid N-acyltransferase MnaT.